Reading from the N-terminus, the 146-residue chain is Hemoglobin subunit beta (146 aa).

The residue at position 1 (valine 1) is an N-acetylvaline. One can recognise a Globin domain in the interval 2 to 146 (HLTAEEKSLV…VANALAHKYH (145 aa)). Threonine 12 carries the phosphothreonine modification. Serine 44 is subject to Phosphoserine. Position 59 is an N6-acetyllysine (lysine 59). Histidine 63 lines the heme b pocket. Residue lysine 82 is modified to N6-acetyllysine. Histidine 92 provides a ligand contact to heme b. The residue at position 93 (cysteine 93) is an S-nitrosocysteine. N6-acetyllysine is present on lysine 144.

It belongs to the globin family. Heterotetramer of two alpha chains and two beta chains. In terms of tissue distribution, red blood cells.

Functionally, involved in oxygen transport from the lung to the various peripheral tissues. The polypeptide is Hemoglobin subunit beta (HBB) (Vulpes vulpes (Red fox)).